The chain runs to 35 residues: Photosystem II reaction center protein T (35 aa).

The helical transmembrane segment at 3–23 (ALVYTFLLVSTLGIIFFAIFF) threads the bilayer.

This sequence belongs to the PsbT family. As to quaternary structure, PSII is composed of 1 copy each of membrane proteins PsbA, PsbB, PsbC, PsbD, PsbE, PsbF, PsbH, PsbI, PsbJ, PsbK, PsbL, PsbM, PsbT, PsbY, PsbZ, Psb30/Ycf12, at least 3 peripheral proteins of the oxygen-evolving complex and a large number of cofactors. It forms dimeric complexes.

The protein localises to the plastid. Its subcellular location is the chloroplast thylakoid membrane. Found at the monomer-monomer interface of the photosystem II (PS II) dimer, plays a role in assembly and dimerization of PSII. PSII is a light-driven water plastoquinone oxidoreductase, using light energy to abstract electrons from H(2)O, generating a proton gradient subsequently used for ATP formation. In Suaeda aralocaspica (Seablite), this protein is Photosystem II reaction center protein T.